A 314-amino-acid chain; its full sequence is Nodulation protein D 1 (314 aa).

The 58-residue stretch at 6–63 folds into the HTH lysR-type domain; that stretch reads LDLNLLVALDALMTERNLTAAARSINLSQPAMSAAVGRLRTYFNDDLFTMVGRELVPT. Positions 23–42 form a DNA-binding region, H-T-H motif; sequence LTAAARSINLSQPAMSAAVG.

Belongs to the LysR transcriptional regulatory family.

In terms of biological role, nodD regulates the expression of the nodABCFE genes which encode other nodulation proteins. NodD is also a negative regulator of its own expression. Binds flavonoids as inducers. The chain is Nodulation protein D 1 (nodD1) from Rhizobium leguminosarum bv. phaseoli.